A 513-amino-acid polypeptide reads, in one-letter code: Light-independent protochlorophyllide reductase subunit B (513 aa).

Aspartate 36 serves as a coordination point for [4Fe-4S] cluster. The Proton donor role is filled by aspartate 299. 434-435 (GM) lines the substrate pocket.

The protein belongs to the ChlB/BchB/BchZ family. In terms of assembly, protochlorophyllide reductase is composed of three subunits; ChlL, ChlN and ChlB. Forms a heterotetramer of two ChlB and two ChlN subunits. The cofactor is [4Fe-4S] cluster.

The protein resides in the plastid. The protein localises to the chloroplast. It carries out the reaction chlorophyllide a + oxidized 2[4Fe-4S]-[ferredoxin] + 2 ADP + 2 phosphate = protochlorophyllide a + reduced 2[4Fe-4S]-[ferredoxin] + 2 ATP + 2 H2O. The protein operates within porphyrin-containing compound metabolism; chlorophyll biosynthesis (light-independent). In terms of biological role, component of the dark-operative protochlorophyllide reductase (DPOR) that uses Mg-ATP and reduced ferredoxin to reduce ring D of protochlorophyllide (Pchlide) to form chlorophyllide a (Chlide). This reaction is light-independent. The NB-protein (ChlN-ChlB) is the catalytic component of the complex. This chain is Light-independent protochlorophyllide reductase subunit B, found in Cycas taitungensis (Prince sago).